Reading from the N-terminus, the 452-residue chain is MITLKEALKLSKDEILALRKELKDKILKTKDLGAYIEQLTGEDLNESGSGIPIAIKDNIQVKNWSVTSASNILQGYVAPYDATVITKLRSAGFAPFGRTNMDEFAMGSTTESSFYGKTLNPTDYSRVPGGSSGGSAAAVAAGIAVAALGSDTGGSIRQPAAFCGCVGFKPTYGRVSRYGLAAYSSSLDQIGPITQNVTDAAILFDVIAGYDKMDSTSYSKEFISTADKLNSDRKLTIAVIENFVNETKDEVKSALLKTIEKLKSAGHKIIYKNLLNSKYNIAAYYIIATAEASTNLSRYDGVRYGNRAKASNLNELYANTRSAGFGEEVQRRMLLGTFVLSSGYYDAYYIKAQKARAYIKKEYEKILDEADLIFMPIAPSVAYKFGELANPLDAYLSDVYTIGVNLAGLPAISVPIAKNSENLNISAQLIGRAYDEQTVLDGALNLEKIIKG.

Active-site charge relay system residues include lysine 56 and serine 131. The active-site Acyl-ester intermediate is the serine 155.

This sequence belongs to the amidase family. GatA subfamily. Heterotrimer of A, B and C subunits.

It carries out the reaction L-glutamyl-tRNA(Gln) + L-glutamine + ATP + H2O = L-glutaminyl-tRNA(Gln) + L-glutamate + ADP + phosphate + H(+). Allows the formation of correctly charged Gln-tRNA(Gln) through the transamidation of misacylated Glu-tRNA(Gln) in organisms which lack glutaminyl-tRNA synthetase. The reaction takes place in the presence of glutamine and ATP through an activated gamma-phospho-Glu-tRNA(Gln). This Campylobacter hominis (strain ATCC BAA-381 / DSM 21671 / CCUG 45161 / LMG 19568 / NCTC 13146 / CH001A) protein is Glutamyl-tRNA(Gln) amidotransferase subunit A.